A 598-amino-acid chain; its full sequence is Chaperone protein DnaK (598 aa).

Residue threonine 180 is modified to Phosphothreonine; by autocatalysis.

The protein belongs to the heat shock protein 70 family.

Acts as a chaperone. This is Chaperone protein DnaK from Thermosipho africanus (strain TCF52B).